Reading from the N-terminus, the 29-residue chain is Dermaseptin-J5 (29 aa).

A Valine amide modification is found at valine 29.

Expressed by the skin glands.

The protein resides in the secreted. Functionally, has antimicrobial activity. The sequence is that of Dermaseptin-J5 from Phasmahyla jandaia (Jandaia leaf frog).